Consider the following 247-residue polypeptide: Zinc finger protein YPR015C (247 aa).

2 consecutive C2H2-type zinc fingers follow at residues 185–207 (KQCPICGKVCSRPSTLRTHYLIH) and 213–237 (FKCTWEHCNKSFNVKSNMLRHLRTH).

The chain is Zinc finger protein YPR015C from Saccharomyces cerevisiae (strain ATCC 204508 / S288c) (Baker's yeast).